We begin with the raw amino-acid sequence, 371 residues long: Macrolide export protein MacA (371 aa).

The Cytoplasmic portion of the chain corresponds to 1 to 10; the sequence is MKKRKTVKKR. Residues 11-31 form a helical membrane-spanning segment; that stretch reads YVIALVIVIAGLITLWRILNA. The Periplasmic portion of the chain corresponds to 32–371; that stretch reads PVPTYQTLIV…IGEAKPGAAQ (340 aa). Residues 92–137 adopt a coiled-coil conformation; sequence IDPEQAENQIKEVEATLMELRAQRQQAEAELKLARVTYSRQQRLAQ.

This sequence belongs to the membrane fusion protein (MFP) (TC 8.A.1) family. In terms of assembly, homohexamer. Part of the tripartite efflux system MacAB-TolC, which is composed of an inner membrane transporter, MacB, a periplasmic membrane fusion protein, MacA, and an outer membrane component, TolC. The complex forms a large protein conduit and can translocate molecules across both the inner and outer membranes. MacA interacts with MacB and TolC.

It localises to the cell inner membrane. In terms of biological role, part of the tripartite efflux system MacAB-TolC. MacA stimulates the ATPase activity of MacB by promoting the closed ATP-bound state of MacB, increases the capacity of MacB to bind macrolides such as erythromycin, and provides a physical link between MacB and TolC. Confers resistance against macrolides. The chain is Macrolide export protein MacA (macA) from Escherichia coli O157:H7.